The primary structure comprises 359 residues: MATH domain and coiled-coil domain-containing protein At2g42475 (359 aa).

The region spanning 6 to 128 (KTSFTFEIEN…NDKLIITVEV (123 aa)) is the MATH domain. Positions 146–337 (EFKELQDLYN…NLELMVLDFK (192 aa)) form a coiled coil.

This is MATH domain and coiled-coil domain-containing protein At2g42475 from Arabidopsis thaliana (Mouse-ear cress).